A 253-amino-acid chain; its full sequence is tRNA (guanine-N(1)-)-methyltransferase (253 aa).

S-adenosyl-L-methionine-binding positions include Gly-113 and 133–138 (IGDYVL).

This sequence belongs to the RNA methyltransferase TrmD family. In terms of assembly, homodimer.

It localises to the cytoplasm. It catalyses the reaction guanosine(37) in tRNA + S-adenosyl-L-methionine = N(1)-methylguanosine(37) in tRNA + S-adenosyl-L-homocysteine + H(+). Functionally, specifically methylates guanosine-37 in various tRNAs. The protein is tRNA (guanine-N(1)-)-methyltransferase of Chloroflexus aurantiacus (strain ATCC 29366 / DSM 635 / J-10-fl).